Consider the following 115-residue polypeptide: Phosphoribosyl-AMP cyclohydrolase (115 aa).

Aspartate 80 lines the Mg(2+) pocket. Cysteine 81 lines the Zn(2+) pocket. The Mg(2+) site is built by aspartate 82 and aspartate 84. Residues cysteine 97 and cysteine 104 each coordinate Zn(2+).

This sequence belongs to the PRA-CH family. As to quaternary structure, homodimer. Mg(2+) is required as a cofactor. It depends on Zn(2+) as a cofactor.

It is found in the cytoplasm. The enzyme catalyses 1-(5-phospho-beta-D-ribosyl)-5'-AMP + H2O = 1-(5-phospho-beta-D-ribosyl)-5-[(5-phospho-beta-D-ribosylamino)methylideneamino]imidazole-4-carboxamide. The protein operates within amino-acid biosynthesis; L-histidine biosynthesis; L-histidine from 5-phospho-alpha-D-ribose 1-diphosphate: step 3/9. Catalyzes the hydrolysis of the adenine ring of phosphoribosyl-AMP. In Mycolicibacterium smegmatis (strain ATCC 700084 / mc(2)155) (Mycobacterium smegmatis), this protein is Phosphoribosyl-AMP cyclohydrolase.